Here is a 216-residue protein sequence, read N- to C-terminus: Somatotropin (216 aa).

The signal sequence occupies residues 1 to 25 (MAPGSWFSPLLIAVVTLGLPQEAAA). His-45 provides a ligand contact to Zn(2+). Cys-78 and Cys-189 are disulfide-bonded. Glu-198 serves as a coordination point for Zn(2+). Cysteines 206 and 214 form a disulfide.

It belongs to the somatotropin/prolactin family.

The protein resides in the secreted. Its function is as follows. Growth hormone plays an important role in growth control. In Gallus gallus (Chicken), this protein is Somatotropin (GH).